The following is a 1804-amino-acid chain: Collagen alpha-1(XI) chain (1804 aa).

Residues 1-34 (MEPWSRWKTKRWIWDLTISTLALTFLFQAREVRG) form the signal peptide. Residues 35–511 (AAPVDILKAL…SKGPTISAQE (477 aa)) constitute a propeptide, N-terminal propeptide. 2 disulfides stabilise this stretch: cysteine 60–cysteine 242 and cysteine 181–cysteine 235. The Laminin G-like domain maps to 70–242 (DVAYRVTEEA…DYCDHYSPDC (173 aa)). Positions 229 to 417 (KAAYDYCDHY…DFTETSINGH (189 aa)) are nonhelical region. Polar residues predominate over residues 315-329 (YQTETPRRVSGSNEP). Disordered regions lie at residues 315–334 (YQTE…PVEE) and 433–506 (EPGM…KGPT). Residues 418–506 (GAYGEKGQKG…YGGDGSKGPT (89 aa)) are triple-helical region (interrupted). Residues 440-488 (GPPGPAGPAGLMGPPGLQGPSGLPGDPGDRGPPGRPGLPGADGLPGPPG) enclose the Collagen-like 1 domain. Composition is skewed to low complexity over residues 447–465 (PAGL…LPGD) and 477–494 (LPGA…LMLP). The tract at residues 507–509 (ISA) is short nonhelical segment. Residues 510–527 (QEAQAQAILQQARIALRG) form a telopeptide region. Residues 526–1567 (RGPPGPMGLT…SIQGDAGDNI (1042 aa)) are disordered. 2 consecutive Collagen-like domains span residues 527–584 (GPPG…GADG) and 567–623 (PPGP…GPPG). The triple-helical region stretch occupies residues 528–1540 (PPGPMGLTGR…PGPPGPPGEV (1013 aa)). Gly residues-rich tracts occupy residues 539-548 (GPVGGPGSAG) and 581-590 (GADGGRGMPG). Lysine 610 carries the allysine modification. Positions 639–655 (PRGLPGEAGPRGLLGPR) are enriched in low complexity. A compositionally biased stretch (pro residues) spans 697–708 (QGLPGPQGPIGP). Residues 715 to 726 (QGKPGLAGLPGA) are compositionally biased toward low complexity. The 54-residue stretch at 728–781 (GPPGHPGKEGQSGEKGALGPPGPQGPIGYPGPRGVKGADGVRGLKGSKGEKGED) folds into the Collagen-like 4 domain. Residues 805-814 (RGEDGPEGPK) show a composition bias toward basic and acidic residues. Low complexity-rich tracts occupy residues 873-901 (KPGP…PGPK), 916-925 (RGPQGPQGPV), and 969-979 (PQGPTGETGPI). Gly residues predominate over residues 1040 to 1049 (GLKGGEGPQG). Positions 1074 to 1083 (RPGPQGPPGP) are enriched in pro residues. The span at 1084 to 1108 (AGEKGAPGEKGPQGPAGRDGVQGPV) shows a compositional bias: low complexity. The segment covering 1160–1169 (GIAGGDGEPG) has biased composition (gly residues). The segment covering 1216–1227 (MGPPGPPGPRGP) has biased composition (pro residues). 2 stretches are compositionally biased toward low complexity: residues 1240-1249 (PGSIGSVGVV) and 1282-1296 (AGPP…IKGP). A compositionally biased stretch (pro residues) spans 1341–1360 (QPGPPGPSGEAGPPGPPGKR). Composition is skewed to low complexity over residues 1383–1392 (AEGPPGKTGP) and 1417–1426 (QGLPGAAGQD). Collagen-like domains are found at residues 1427–1482 (GPPG…SPGA) and 1481–1539 (GAKG…PPGE). The segment covering 1428–1437 (PPGPLGPPGL) has biased composition (pro residues). Lysine 1450 bears the Allysine mark. The span at 1453-1462 (PGLIGLIGPP) shows a compositional bias: low complexity. Gly residues predominate over residues 1481 to 1490 (GAKGDGGIPG). A compositionally biased stretch (pro residues) spans 1491–1507 (PAGPIGPPGPPGLPGPA). The segment covering 1509–1519 (PKGNKGSSGPT) has biased composition (low complexity). Pro residues predominate over residues 1528–1537 (PGPPGPPGPP). A nonhelical region (C-terminal) region spans residues 1541-1561 (IQPLPILSPKKTRRHTESIQG). A propeptide spans 1562-1804 (DAGDNILDYS…FEVGPACFLG (243 aa)) (C-terminal propeptide). A Fibrillar collagen NC1 domain is found at 1575–1803 (EEIFGSLNSL…GFEVGPACFL (229 aa)). Cysteine 1605 and cysteine 1637 are disulfide-bonded. Ca(2+) contacts are provided by aspartate 1623, asparagine 1625, glutamine 1626, cysteine 1628, and aspartate 1631. Asparagine 1638 carries an N-linked (GlcNAc...) asparagine glycan. 2 disulfide bridges follow: cysteine 1646-cysteine 1801 and cysteine 1712-cysteine 1755.

The protein belongs to the fibrillar collagen family. As to quaternary structure, trimers composed of three different chains: alpha 1(XI), alpha 2(XI), and alpha 3(XI). Alpha 3(XI) is a post-translational modification of alpha 1(II). Alpha 1(V) can also be found instead of alpha 3(XI)=1(II). Post-translationally, prolines at the third position of the tripeptide repeating unit (G-X-Y) are hydroxylated in some or all of the chains. In terms of processing, N-glycosylated.

The protein localises to the secreted. It is found in the extracellular space. It localises to the extracellular matrix. May play an important role in fibrillogenesis by controlling lateral growth of collagen II fibrils. The chain is Collagen alpha-1(XI) chain (Col11a1) from Mus musculus (Mouse).